The sequence spans 189 residues: UPF0301 protein CTLon_0458 (189 aa).

It belongs to the UPF0301 (AlgH) family.

The chain is UPF0301 protein CTLon_0458 from Chlamydia trachomatis serovar L2b (strain UCH-1/proctitis).